The chain runs to 263 residues: Glutamate racemase (263 aa).

Substrate is bound by residues 13–14 (DS) and 45–46 (YG). Residue Cys-77 is the Proton donor/acceptor of the active site. 78–79 (NT) serves as a coordination point for substrate. The active-site Proton donor/acceptor is Cys-185. 186–187 (TH) is a binding site for substrate.

Belongs to the aspartate/glutamate racemases family.

The catalysed reaction is L-glutamate = D-glutamate. The protein operates within cell wall biogenesis; peptidoglycan biosynthesis. Provides the (R)-glutamate required for cell wall biosynthesis. This Vibrio vulnificus (strain CMCP6) protein is Glutamate racemase.